Consider the following 204-residue polypeptide: Guanylate kinase (204 aa).

The 180-residue stretch at 5–184 (GLLIVLSGPS…ACDKIKAIVL (180 aa)) folds into the Guanylate kinase-like domain. Residue 12–19 (GPSGVGKG) participates in ATP binding.

It belongs to the guanylate kinase family.

Its subcellular location is the cytoplasm. The enzyme catalyses GMP + ATP = GDP + ADP. Functionally, essential for recycling GMP and indirectly, cGMP. The chain is Guanylate kinase (gmk) from Bacillus subtilis (strain 168).